Here is a 789-residue protein sequence, read N- to C-terminus: SWI5-dependent HO expression protein 4 (789 aa).

Ser18 is modified (phosphoserine).

It is found in the cytoplasm. Its function is as follows. Required for mother cell-specific ho expression. Might be required for the transport of factors (such as ASH1) that promote HO repression from the mother cell into its bud. The protein is SWI5-dependent HO expression protein 4 (SHE4) of Saccharomyces cerevisiae (strain ATCC 204508 / S288c) (Baker's yeast).